Consider the following 399-residue polypeptide: Large envelope protein (399 aa).

Met1 is subject to N-acetylmethionine. Gly2 carries the N-myristoyl glycine; by host lipid modification. The pre-S1 stretch occupies residues 2–118 (GLSWTVPLEW…PPLRDTHPQA (117 aa)). The segment at 2-173 (GLSWTVPLEW…FSRIGDPAPN (172 aa)) is pre-S. Over 2–180 (GLSWTVPLEW…APNMESITSG (179 aa)) the chain is Virion surface; in external conformation. Residues 2–252 (GLSWTVPLEW…PGYRWMCLRR (251 aa)) lie on the Intravirion; in internal conformation side of the membrane. N-linked (GlcNAc...) asparagine glycosylation occurs at Ser4. A disordered region spans residues 85–110 (KTLPADPPPASTNRQSGRQPTPITPP). Polar residues predominate over residues 95–105 (STNRQSGRQPT). The interval 119–173 (MQWNSTTFHQALQDPRVRGLYFPAGGSSSGTVNPVPTTASLISSIFSRIGDPAPN) is pre-S2. Residues 181-201 (FLGPLLVLQAGFFLLTKILTI) traverse the membrane as a helical segment. The Intravirion; in external conformation segment spans residues 202–252 (PQSLDSWWTSLNFLGGAPVCLGQNSQSPTSNHSPTSCPPICPGYRWMCLRR). Residues 253–273 (FIIFLFILLLCLIFLLVLLDY) form a helical membrane-spanning segment. Residues 274–347 (QGMLPVCPLI…WASARFSWLS (74 aa)) lie on the Virion surface side of the membrane. An N-linked (GlcNAc...) asparagine; by host glycan is attached at Asn319. A helical transmembrane segment spans residues 348-368 (LLVPFVQWFAGLSPTVWLSVI). Residues 369–374 (WMMWYW) lie on the Intravirion side of the membrane. A helical transmembrane segment spans residues 375 to 397 (GPSLYDILSPFIPLLPIFFCLWV). At 398–399 (YI) the chain is on the virion surface side.

Belongs to the orthohepadnavirus major surface antigen family. In terms of assembly, in its internal form (Li-HBsAg), interacts with the capsid protein and with the isoform S. Interacts with host chaperone CANX. As to quaternary structure, associates with host chaperone CANX through its pre-S2 N glycan; this association may be essential for isoform M proper secretion. Interacts with isoform L. Interacts with the antigens of satellite virus HDV (HDVAgs); this interaction is required for encapsidation of HDV genomic RNA. In terms of processing, isoform M is N-terminally acetylated by host at a ratio of 90%, and N-glycosylated by host at the pre-S2 region. Post-translationally, myristoylated.

The protein localises to the virion membrane. Its function is as follows. The large envelope protein exists in two topological conformations, one which is termed 'external' or Le-HBsAg and the other 'internal' or Li-HBsAg. In its external conformation the protein attaches the virus to cell receptors and thereby initiating infection. This interaction determines the species specificity and liver tropism. This attachment induces virion internalization predominantly through caveolin-mediated endocytosis. The large envelope protein also assures fusion between virion membrane and endosomal membrane. In its internal conformation the protein plays a role in virion morphogenesis and mediates the contact with the nucleocapsid like a matrix protein. Functionally, the middle envelope protein plays an important role in the budding of the virion. It is involved in the induction of budding in a nucleocapsid independent way. In this process the majority of envelope proteins bud to form subviral lipoprotein particles of 22 nm of diameter that do not contain a nucleocapsid. The polypeptide is Large envelope protein (Homo sapiens (Human)).